The chain runs to 265 residues: uncharacterized protein (265 aa).

6 residues coordinate a divalent metal cation: H7, H9, E94, H130, H155, and D205.

Belongs to the metallo-dependent hydrolases superfamily. TatD-type hydrolase family. The cofactor is a divalent metal cation.

This is an uncharacterized protein from Escherichia coli O157:H7.